A 405-amino-acid chain; its full sequence is Aspartokinase (405 aa).

ACT domains are found at residues 267–344 (VSME…AKVS) and 345–405 (IVGV…QLDQ).

Belongs to the aspartokinase family.

The catalysed reaction is L-aspartate + ATP = 4-phospho-L-aspartate + ADP. It participates in amino-acid biosynthesis; L-lysine biosynthesis via DAP pathway; (S)-tetrahydrodipicolinate from L-aspartate: step 1/4. Its pathway is amino-acid biosynthesis; L-methionine biosynthesis via de novo pathway; L-homoserine from L-aspartate: step 1/3. It functions in the pathway amino-acid biosynthesis; L-threonine biosynthesis; L-threonine from L-aspartate: step 1/5. This Helicobacter pylori (strain ATCC 700392 / 26695) (Campylobacter pylori) protein is Aspartokinase (lysC).